The primary structure comprises 226 residues: AA9 family lytic polysaccharide monooxygenase E (226 aa).

Residues 1–18 (MLANGAIVFLAAALGVSG) form the signal peptide. His19 contacts Cu(2+). 2 cysteine pairs are disulfide-bonded: Cys56-Cys174 and Cys144-Cys226. Asn69 carries an N-linked (GlcNAc...) asparagine glycan. His86 provides a ligand contact to Cu(2+). The O2 site is built by His160 and Gln169. Tyr171 is a Cu(2+) binding site.

The protein belongs to the polysaccharide monooxygenase AA9 family. Cu(2+) serves as cofactor.

The protein resides in the secreted. The enzyme catalyses [(1-&gt;4)-beta-D-glucosyl]n+m + reduced acceptor + O2 = 4-dehydro-beta-D-glucosyl-[(1-&gt;4)-beta-D-glucosyl]n-1 + [(1-&gt;4)-beta-D-glucosyl]m + acceptor + H2O.. Functionally, lytic polysaccharide monooxygenase (LPMO) that depolymerizes crystalline and amorphous polysaccharides via the oxidation of scissile alpha- or beta-(1-4)-glycosidic bonds, yielding C1 and C4 oxidation products. Catalysis by LPMOs requires the reduction of the active-site copper from Cu(II) to Cu(I) by a reducing agent and H(2)O(2) or O(2) as a cosubstrate. Shows endoglucanase activity on tamarind xyloglucan, as well as on beechwood xylan when combined with phosphoric acid swollen cellulose (PASC). Shows no activity on wheat arabinoxylan, konjac glucomannan, acetylated spruce galactoglucomannan, or cellopentaose. This is AA9 family lytic polysaccharide monooxygenase E from Thermothielavioides terrestris (strain ATCC 38088 / NRRL 8126) (Thielavia terrestris).